We begin with the raw amino-acid sequence, 394 residues long: 8-amino-7-oxononanoate synthase (394 aa).

Position 21 (Arg-21) interacts with substrate. 112 to 113 (GY) contacts pyridoxal 5'-phosphate. His-137 is a substrate binding site. Pyridoxal 5'-phosphate-binding residues include Ser-183, His-211, and Thr-239. At Lys-242 the chain carries N6-(pyridoxal phosphate)lysine. Thr-358 lines the substrate pocket.

Belongs to the class-II pyridoxal-phosphate-dependent aminotransferase family. BioF subfamily. In terms of assembly, homodimer. It depends on pyridoxal 5'-phosphate as a cofactor.

It catalyses the reaction 6-carboxyhexanoyl-[ACP] + L-alanine + H(+) = (8S)-8-amino-7-oxononanoate + holo-[ACP] + CO2. The protein operates within cofactor biosynthesis; biotin biosynthesis. Catalyzes the decarboxylative condensation of pimeloyl-[acyl-carrier protein] and L-alanine to produce 8-amino-7-oxononanoate (AON), [acyl-carrier protein], and carbon dioxide. This chain is 8-amino-7-oxononanoate synthase, found in Paraburkholderia xenovorans (strain LB400).